A 122-amino-acid chain; its full sequence is Large ribosomal subunit protein uL14 (122 aa).

The protein belongs to the universal ribosomal protein uL14 family. Part of the 50S ribosomal subunit. Forms a cluster with proteins L3 and L19. In the 70S ribosome, L14 and L19 interact and together make contacts with the 16S rRNA in bridges B5 and B8.

In terms of biological role, binds to 23S rRNA. Forms part of two intersubunit bridges in the 70S ribosome. The sequence is that of Large ribosomal subunit protein uL14 from Lactobacillus acidophilus (strain ATCC 700396 / NCK56 / N2 / NCFM).